A 182-amino-acid polypeptide reads, in one-letter code: Bifunctional protein PyrR (182 aa).

The PRPP-binding signature appears at 99 to 111 (IVLVDDVLFTGRT).

Belongs to the purine/pyrimidine phosphoribosyltransferase family. PyrR subfamily. Homodimer and homohexamer; in equilibrium.

It carries out the reaction UMP + diphosphate = 5-phospho-alpha-D-ribose 1-diphosphate + uracil. Regulates transcriptional attenuation of the pyrimidine nucleotide (pyr) operon by binding in a uridine-dependent manner to specific sites on pyr mRNA. This disrupts an antiterminator hairpin in the RNA and favors formation of a downstream transcription terminator, leading to a reduced expression of downstream genes. Functionally, also displays a weak uracil phosphoribosyltransferase activity which is not physiologically significant. This Caldicellulosiruptor bescii (strain ATCC BAA-1888 / DSM 6725 / KCTC 15123 / Z-1320) (Anaerocellum thermophilum) protein is Bifunctional protein PyrR.